We begin with the raw amino-acid sequence, 227 residues long: Cytochrome c oxidase subunit 2 (227 aa).

The Mitochondrial intermembrane segment spans residues 1-14 (MAYTFQLGLQDATS). The helical transmembrane segment at 15-45 (PIMEELTNFHDHTLMIVFLISSLVLYVISLM) threads the bilayer. At 46-59 (LTTKLTHTNTMDAQ) the chain is on the mitochondrial matrix side. Residues 60 to 87 (EVETIWTILPAVILILIALPSLRILYMM) form a helical membrane-spanning segment. The Mitochondrial intermembrane portion of the chain corresponds to 88-227 (DEINNPVLTV…HFENWSASMI (140 aa)). Positions 161, 196, 198, 200, 204, and 207 each coordinate Cu cation. Glu-198 contacts Mg(2+).

It belongs to the cytochrome c oxidase subunit 2 family. Component of the cytochrome c oxidase (complex IV, CIV), a multisubunit enzyme composed of 14 subunits. The complex is composed of a catalytic core of 3 subunits MT-CO1, MT-CO2 and MT-CO3, encoded in the mitochondrial DNA, and 11 supernumerary subunits COX4I, COX5A, COX5B, COX6A, COX6B, COX6C, COX7A, COX7B, COX7C, COX8 and NDUFA4, which are encoded in the nuclear genome. The complex exists as a monomer or a dimer and forms supercomplexes (SCs) in the inner mitochondrial membrane with NADH-ubiquinone oxidoreductase (complex I, CI) and ubiquinol-cytochrome c oxidoreductase (cytochrome b-c1 complex, complex III, CIII), resulting in different assemblies (supercomplex SCI(1)III(2)IV(1) and megacomplex MCI(2)III(2)IV(2)). Found in a complex with TMEM177, COA6, COX18, COX20, SCO1 and SCO2. Interacts with TMEM177 in a COX20-dependent manner. Interacts with COX20. Interacts with COX16. Requires Cu cation as cofactor.

The protein localises to the mitochondrion inner membrane. It catalyses the reaction 4 Fe(II)-[cytochrome c] + O2 + 8 H(+)(in) = 4 Fe(III)-[cytochrome c] + 2 H2O + 4 H(+)(out). Its function is as follows. Component of the cytochrome c oxidase, the last enzyme in the mitochondrial electron transport chain which drives oxidative phosphorylation. The respiratory chain contains 3 multisubunit complexes succinate dehydrogenase (complex II, CII), ubiquinol-cytochrome c oxidoreductase (cytochrome b-c1 complex, complex III, CIII) and cytochrome c oxidase (complex IV, CIV), that cooperate to transfer electrons derived from NADH and succinate to molecular oxygen, creating an electrochemical gradient over the inner membrane that drives transmembrane transport and the ATP synthase. Cytochrome c oxidase is the component of the respiratory chain that catalyzes the reduction of oxygen to water. Electrons originating from reduced cytochrome c in the intermembrane space (IMS) are transferred via the dinuclear copper A center (CU(A)) of subunit 2 and heme A of subunit 1 to the active site in subunit 1, a binuclear center (BNC) formed by heme A3 and copper B (CU(B)). The BNC reduces molecular oxygen to 2 water molecules using 4 electrons from cytochrome c in the IMS and 4 protons from the mitochondrial matrix. The chain is Cytochrome c oxidase subunit 2 (MT-CO2) from Niviventer culturatus (Oldfield white-bellied rat).